A 406-amino-acid polypeptide reads, in one-letter code: UPF0754 membrane protein Cyan7425_4067 (406 aa).

Residues 381–401 form a helical membrane-spanning segment; it reads IVTLGGVLGLLIGIAQSVLLL.

It belongs to the UPF0754 family.

It is found in the cell inner membrane. The chain is UPF0754 membrane protein Cyan7425_4067 from Cyanothece sp. (strain PCC 7425 / ATCC 29141).